A 274-amino-acid polypeptide reads, in one-letter code: N-acetylmuramic acid 6-phosphate etherase (274 aa).

One can recognise an SIS domain in the interval 52-215; sequence IIPRMEQGGR…STSIMIRLGR (164 aa). The active-site Proton donor is the Glu-80. The active site involves Glu-111.

Belongs to the GCKR-like family. MurNAc-6-P etherase subfamily. In terms of assembly, homodimer.

It catalyses the reaction N-acetyl-D-muramate 6-phosphate + H2O = N-acetyl-D-glucosamine 6-phosphate + (R)-lactate. It participates in amino-sugar metabolism; N-acetylmuramate degradation. Specifically catalyzes the cleavage of the D-lactyl ether substituent of MurNAc 6-phosphate, producing GlcNAc 6-phosphate and D-lactate. The polypeptide is N-acetylmuramic acid 6-phosphate etherase (Porphyromonas gingivalis (strain ATCC BAA-308 / W83)).